Here is a 605-residue protein sequence, read N- to C-terminus: Terpenoid synthase 18 (605 aa).

Aspartate 356, aspartate 360, asparagine 500, threonine 504, and glutamate 508 together coordinate Mg(2+). Positions 356–360 (DDTYD) match the DDXXD motif motif.

It belongs to the terpene synthase family. Tpsa subfamily. Mg(2+) serves as cofactor. Requires Mn(2+) as cofactor. Predominantly expressed in flowers and siliques but also in roots and leaves.

The protein localises to the cytoplasm. It participates in secondary metabolite biosynthesis; terpenoid biosynthesis. This chain is Terpenoid synthase 18 (TPS18), found in Arabidopsis thaliana (Mouse-ear cress).